A 411-amino-acid polypeptide reads, in one-letter code: GPI-anchor transamidase (411 aa).

Positions 1–22 (MRIAMHLPLLLLYIFLLPLSGA) are cleaved as a signal peptide. Topologically, residues 23-376 (NNTDAAHEVI…DIDSNECFFT (354 aa)) are lumenal. Catalysis depends on residues His157 and Cys199. Asn256 and Asn346 each carry an N-linked (GlcNAc...) asparagine glycan. A helical membrane pass occupies residues 377–397 (SFKQSATIILALIVTILWFML). Residues 398–411 (RGNTAKATYDLYTN) lie on the Cytoplasmic side of the membrane.

It belongs to the peptidase C13 family. In terms of assembly, forms a complex with CDC91, GPI16, GPI17 and GAA1. In terms of processing, the disulfide bond between GPI8 and GPI16 is important for normal enzyme activity.

The protein resides in the endoplasmic reticulum membrane. It participates in glycolipid biosynthesis; glycosylphosphatidylinositol-anchor biosynthesis. Its function is as follows. Mediates GPI anchoring in the endoplasmic reticulum, by replacing a protein's C-terminal GPI attachment signal peptide with a pre-assembled GPI. During this transamidation reaction, the GPI transamidase forms a carbonyl intermediate with the substrate protein. This Saccharomyces cerevisiae (strain ATCC 204508 / S288c) (Baker's yeast) protein is GPI-anchor transamidase (GPI8).